Here is an 85-residue protein sequence, read N- to C-terminus: ALVLLAFQVQADPIQNTDEETKTEEQPGEDDQAVSVSFGDPEGSSLQEESLRDLVCYCRTRGCKRRERMNGTCRKGHLMHTLCCR.

An N-terminal signal peptide occupies residues 1-11 (ALVLLAFQVQA). Residues 12–50 (DPIQNTDEETKTEEQPGEDDQAVSVSFGDPEGSSLQEES) constitute a propeptide that is removed on maturation. A disordered region spans residues 13 to 48 (PIQNTDEETKTEEQPGEDDQAVSVSFGDPEGSSLQE). Cystine bridges form between Cys56/Cys84, Cys58/Cys73, and Cys63/Cys83.

This sequence belongs to the alpha-defensin family. Paneth cells of the small bowel.

It localises to the secreted. Probably contributes to the antimicrobial barrier function of the small bowel mucosa. In Mus musculus (Mouse), this protein is Alpha-defensin 14 (Defa14).